Here is a 360-residue protein sequence, read N- to C-terminus: Phospho-N-acetylmuramoyl-pentapeptide-transferase (360 aa).

10 helical membrane passes run I27–M47, T73–L93, F97–W117, W132–A152, F164–I184, G199–G219, A236–F256, V263–I283, I288–V308, and K337–L357.

Belongs to the glycosyltransferase 4 family. MraY subfamily. The cofactor is Mg(2+).

The protein resides in the cell inner membrane. It carries out the reaction UDP-N-acetyl-alpha-D-muramoyl-L-alanyl-gamma-D-glutamyl-meso-2,6-diaminopimeloyl-D-alanyl-D-alanine + di-trans,octa-cis-undecaprenyl phosphate = di-trans,octa-cis-undecaprenyl diphospho-N-acetyl-alpha-D-muramoyl-L-alanyl-D-glutamyl-meso-2,6-diaminopimeloyl-D-alanyl-D-alanine + UMP. It participates in cell wall biogenesis; peptidoglycan biosynthesis. In terms of biological role, catalyzes the initial step of the lipid cycle reactions in the biosynthesis of the cell wall peptidoglycan: transfers peptidoglycan precursor phospho-MurNAc-pentapeptide from UDP-MurNAc-pentapeptide onto the lipid carrier undecaprenyl phosphate, yielding undecaprenyl-pyrophosphoryl-MurNAc-pentapeptide, known as lipid I. This Alcanivorax borkumensis (strain ATCC 700651 / DSM 11573 / NCIMB 13689 / SK2) protein is Phospho-N-acetylmuramoyl-pentapeptide-transferase.